The primary structure comprises 510 residues: UDP-N-acetylmuramoyl-tripeptide--D-alanyl-D-alanine ligase (510 aa).

136–142 (GSSGKTS) contributes to the ATP binding site.

The protein belongs to the MurCDEF family. MurF subfamily.

Its subcellular location is the cytoplasm. It catalyses the reaction D-alanyl-D-alanine + UDP-N-acetyl-alpha-D-muramoyl-L-alanyl-gamma-D-glutamyl-meso-2,6-diaminopimelate + ATP = UDP-N-acetyl-alpha-D-muramoyl-L-alanyl-gamma-D-glutamyl-meso-2,6-diaminopimeloyl-D-alanyl-D-alanine + ADP + phosphate + H(+). Its pathway is cell wall biogenesis; peptidoglycan biosynthesis. In terms of biological role, involved in cell wall formation. Catalyzes the final step in the synthesis of UDP-N-acetylmuramoyl-pentapeptide, the precursor of murein. The protein is UDP-N-acetylmuramoyl-tripeptide--D-alanyl-D-alanine ligase of Mycobacterium bovis (strain ATCC BAA-935 / AF2122/97).